The sequence spans 177 residues: Large ribosomal subunit protein uL6 (177 aa).

It belongs to the universal ribosomal protein uL6 family. As to quaternary structure, part of the 50S ribosomal subunit.

In terms of biological role, this protein binds to the 23S rRNA, and is important in its secondary structure. It is located near the subunit interface in the base of the L7/L12 stalk, and near the tRNA binding site of the peptidyltransferase center. This is Large ribosomal subunit protein uL6 from Vibrio parahaemolyticus serotype O3:K6 (strain RIMD 2210633).